Reading from the N-terminus, the 157-residue chain is Large ribosomal subunit protein uL15 (157 aa).

The segment at 1 to 56 (MRLEDIRPQPGSTRRRRRLGRGIAAGQGASCGKGMRGQKARKGGGPRPGFEGGQTP) is disordered. Residues 23-35 (IAAGQGASCGKGM) show a composition bias toward gly residues.

This sequence belongs to the universal ribosomal protein uL15 family. In terms of assembly, part of the 50S ribosomal subunit.

Binds to the 23S rRNA. This chain is Large ribosomal subunit protein uL15, found in Synechococcus sp. (strain JA-3-3Ab) (Cyanobacteria bacterium Yellowstone A-Prime).